A 483-amino-acid polypeptide reads, in one-letter code: UDP-N-acetylmuramyl-tripeptide synthetase (483 aa).

Residue Ser43 participates in UDP-N-acetyl-alpha-D-muramoyl-L-alanyl-D-glutamate binding. ATP is bound at residue 116–122 (GTKGKTT). UDP-N-acetyl-alpha-D-muramoyl-L-alanyl-D-glutamate is bound by residues 160 to 161 (TT), Ser187, and Arg195. Lys229 carries the post-translational modification N6-carboxylysine.

This sequence belongs to the MurCDEF family. MurE subfamily. Carboxylation is probably crucial for Mg(2+) binding and, consequently, for the gamma-phosphate positioning of ATP.

The protein resides in the cytoplasm. The protein operates within cell wall biogenesis; peptidoglycan biosynthesis. Its function is as follows. Catalyzes the addition of an amino acid to the nucleotide precursor UDP-N-acetylmuramoyl-L-alanyl-D-glutamate (UMAG) in the biosynthesis of bacterial cell-wall peptidoglycan. The polypeptide is UDP-N-acetylmuramyl-tripeptide synthetase (Lactococcus lactis subsp. cremoris (strain SK11)).